The following is a 719-amino-acid chain: Polyphosphate kinase (719 aa).

Position 54 (Asn54) interacts with ATP. Residues Arg379 and Arg409 each coordinate Mg(2+). A PLD phosphodiesterase domain is found at 434–468 (THLKTHSKIALVVKRMNNKLTSFIHLGTGNYNDKT). The active-site Phosphohistidine intermediate is the His439. Positions 472, 568, and 596 each coordinate ATP.

The protein belongs to the polyphosphate kinase 1 (PPK1) family. Mg(2+) serves as cofactor. An intermediate of this reaction is the autophosphorylated ppk in which a phosphate is covalently linked to a histidine residue through a N-P bond.

It catalyses the reaction [phosphate](n) + ATP = [phosphate](n+1) + ADP. Catalyzes the reversible transfer of the terminal phosphate of ATP to form a long-chain polyphosphate (polyP). This chain is Polyphosphate kinase, found in Staphylococcus saprophyticus subsp. saprophyticus (strain ATCC 15305 / DSM 20229 / NCIMB 8711 / NCTC 7292 / S-41).